The sequence spans 120 residues: Holo-[acyl-carrier-protein] synthase (120 aa).

Residues D8 and E58 each contribute to the Mg(2+) site.

Belongs to the P-Pant transferase superfamily. AcpS family. Mg(2+) is required as a cofactor.

The protein resides in the cytoplasm. The catalysed reaction is apo-[ACP] + CoA = holo-[ACP] + adenosine 3',5'-bisphosphate + H(+). Functionally, transfers the 4'-phosphopantetheine moiety from coenzyme A to a Ser of acyl-carrier-protein. In Streptococcus pneumoniae (strain Hungary19A-6), this protein is Holo-[acyl-carrier-protein] synthase.